A 487-amino-acid polypeptide reads, in one-letter code: MVSQVVAEEKPQLLSKKAGCNSHGQDSSYFLGWQEYEKNPFDPVSNPSGIIQMGLAENQLSFDLLEEWLEKNPHALGLRREGGGASVFRELALFQDYHGLPAFKNALARFMSEQRGYKVVFDPSNIVLTAGATSANEALMFCLADHGDAFLIPTPYYPGFDRDLKWRTGAEIVPVHCASANGFRVTRPALDDAYRRAQKRRLRVKGVLITNPSNPLGTASPRADLETIVDFVAAKGIHLISDEIYAGTAFAEPPAGFVSALEVVAGRDGGGADVSDRVHVVYSLSKDLGLPGFRVGAIYSANAAVVSAATKMSSFGLVSSQTQYLLAALLGDRDFTRSYVAENKRRIKERHDQLVDGLREIGIGCLPSNAGLFCWVDMSHLMRSRSFAGEMELWKKVVFEVGLNISPGSSCHCREPGWFRVCFANMSAKTLDVAMQRLRSFVDSATGGGDNAALRRAAVPVRSVSCPLAIKWALRLTPSIADRKAER.

Position 286 is an N6-(pyridoxal phosphate)lysine (Lys-286).

This sequence belongs to the class-I pyridoxal-phosphate-dependent aminotransferase family. Homodimer. Pyridoxal 5'-phosphate is required as a cofactor.

It carries out the reaction S-adenosyl-L-methionine = 1-aminocyclopropane-1-carboxylate + S-methyl-5'-thioadenosine + H(+). It participates in alkene biosynthesis; ethylene biosynthesis via S-adenosyl-L-methionine; ethylene from S-adenosyl-L-methionine: step 1/2. Catalyzes the formation of 1-aminocyclopropane-1-carboxylate, a direct precursor of ethylene in higher plants. The protein is 1-aminocyclopropane-1-carboxylate synthase 1 (ACC1) of Oryza sativa subsp. indica (Rice).